The sequence spans 253 residues: Imidazole glycerol phosphate synthase subunit HisF (253 aa).

Residues aspartate 11 and aspartate 130 contribute to the active site.

Belongs to the HisA/HisF family. In terms of assembly, heterodimer of HisH and HisF.

Its subcellular location is the cytoplasm. The enzyme catalyses 5-[(5-phospho-1-deoxy-D-ribulos-1-ylimino)methylamino]-1-(5-phospho-beta-D-ribosyl)imidazole-4-carboxamide + L-glutamine = D-erythro-1-(imidazol-4-yl)glycerol 3-phosphate + 5-amino-1-(5-phospho-beta-D-ribosyl)imidazole-4-carboxamide + L-glutamate + H(+). It functions in the pathway amino-acid biosynthesis; L-histidine biosynthesis; L-histidine from 5-phospho-alpha-D-ribose 1-diphosphate: step 5/9. Its function is as follows. IGPS catalyzes the conversion of PRFAR and glutamine to IGP, AICAR and glutamate. The HisF subunit catalyzes the cyclization activity that produces IGP and AICAR from PRFAR using the ammonia provided by the HisH subunit. The sequence is that of Imidazole glycerol phosphate synthase subunit HisF from Clostridium beijerinckii (strain ATCC 51743 / NCIMB 8052) (Clostridium acetobutylicum).